A 157-amino-acid polypeptide reads, in one-letter code: Transcription elongation factor GreA (157 aa).

Residues 12–74 (LKKLEEELEY…TLEAMLKNAK (63 aa)) are a coiled coil.

The protein belongs to the GreA/GreB family.

Functionally, necessary for efficient RNA polymerase transcription elongation past template-encoded arresting sites. The arresting sites in DNA have the property of trapping a certain fraction of elongating RNA polymerases that pass through, resulting in locked ternary complexes. Cleavage of the nascent transcript by cleavage factors such as GreA or GreB allows the resumption of elongation from the new 3'terminus. GreA releases sequences of 2 to 3 nucleotides. The chain is Transcription elongation factor GreA from Caldanaerobacter subterraneus subsp. tengcongensis (strain DSM 15242 / JCM 11007 / NBRC 100824 / MB4) (Thermoanaerobacter tengcongensis).